We begin with the raw amino-acid sequence, 187 residues long: Small ribosomal subunit protein uS5 (187 aa).

The tract at residues 1–20 is disordered; the sequence is MAERENRRDRRDDRSREETP. The S5 DRBM domain maps to 22–85; the sequence is FADRLVAINR…EQAKRQMIRV (64 aa). The interval 154–174 is disordered; that stretch reads DGLKRESSPRQVAQRRGKKVA.

It belongs to the universal ribosomal protein uS5 family. Part of the 30S ribosomal subunit. Contacts proteins S4 and S8.

Its function is as follows. With S4 and S12 plays an important role in translational accuracy. Located at the back of the 30S subunit body where it stabilizes the conformation of the head with respect to the body. The polypeptide is Small ribosomal subunit protein uS5 (Cereibacter sphaeroides (strain ATCC 17025 / ATH 2.4.3) (Rhodobacter sphaeroides)).